We begin with the raw amino-acid sequence, 996 residues long: Oxysterol-binding protein homolog 3 (996 aa).

The tract at residues 1–183 (METIDIQNRS…KKKILFNASV (183 aa)) is GOLD domain. Positions 75–114 (GSSSNIEEHHRRSSQHSHSSSNGSDNKRKERSYSSLSISG) are disordered. Phosphoserine occurs at positions 190 and 193. Thr-210 is modified (phosphothreonine). A PH domain is found at 221 to 315 (GRYLQGYLLK…WVDALQTCFD (95 aa)). Thr-323 is subject to Phosphothreonine. Ser-324 bears the Phosphoserine mark. Residues Thr-325 and Thr-352 each carry the phosphothreonine modification. The tract at residues 338-372 (EVINKSSPQDHDHLTPTATTKSALSHRQHTQKDMD) is disordered. An FFAT motif is present at residues 514 to 520 (EFFDAEE). The segment at 556 to 611 (KEVQLSGSEQIASSSVESYTTNDENHSRKHLKNRHKNRRRGHPHHQKTKSAQSSTE) is disordered. Residues 558–577 (VQLSGSEQIASSSVESYTTN) are compositionally biased toward polar residues. The span at 582-603 (SRKHLKNRHKNRRRGHPHHQKT) shows a compositional bias: basic residues. A Phosphoserine modification is found at Ser-605. The interval 642-982 (SLLSFLRKNV…YITGPKSYWE (341 aa)) is OSBP-related domain (ORD). A 1,2-diacyl-sn-glycero-3-phospho-(1D-myo-inositol 4-phosphate) contacts are provided by residues 657 to 660 (SIAM), Lys-717, 745 to 746 (HR), and 945 to 949 (EQLQR).

This sequence belongs to the OSBP family. Interacts with SCS2.

It localises to the cytoplasm. The protein localises to the endoplasmic reticulum membrane. Functionally, lipid transport protein (LTP) involved in non-vesicular transfer of lipids between membranes. Functions in phosphoinositide-coupled directional transport of various lipids by carrying the lipid molecule in a hydrophobic pocket and transferring it between membranes through the cytosol. Involved in maintenance of intracellular sterol distribution and homeostasis. May serve as a sensor of PI4P levels at PM-ER membrane contact site, regulating PI4P phosphatase SAC1 activity. May be involved in ergosterol transport from the plasma membrane (PM) to the ER, however it does not bind sterols directly. Plays a role in the positive regulation of vesicular transport of ceramide from the ER to the Golgi, negatively regulating COPII-mediated ER export of cargos. This is Oxysterol-binding protein homolog 3 from Saccharomyces cerevisiae (strain ATCC 204508 / S288c) (Baker's yeast).